A 129-amino-acid chain; its full sequence is HTH-type transcriptional regulator DdrOP3 (129 aa).

An HTH cro/C1-type domain is found at 7–61 (LRELRQERGLRLKDIAGAAQISVPYLSDLERGRTNPSLETLQSLASTYGITVHDL). A DNA-binding region (H-T-H motif) is located at residues 18-37 (LKDIAGAAQISVPYLSDLER).

Cleaved between Leu-106 and Arg-107 by the IrrE metalloprotease after exposure to radiation. Cleavage inactivates DdrOP3, leading to derepression of the target genes.

In terms of biological role, repressor specific for genes preceded by a radiation/desiccation response motif (RDRM) site, which is present upstream of several radiation-induced genes. The chain is HTH-type transcriptional regulator DdrOP3 from Deinococcus deserti (strain DSM 17065 / CIP 109153 / LMG 22923 / VCD115).